The chain runs to 229 residues: Ribonuclease 3 (229 aa).

An RNase III domain is found at 4–133 (WEELQESVGF…FIGALYLDNG (130 aa)). Position 46 (Glu-46) interacts with Mg(2+). Residue Asp-50 is part of the active site. Asp-119 and Glu-122 together coordinate Mg(2+). The active site involves Glu-122. In terms of domain architecture, DRBM spans 159 to 228 (DYKTQLQEIV…AQFAINKLIH (70 aa)).

It belongs to the ribonuclease III family. As to quaternary structure, homodimer. The cofactor is Mg(2+).

The protein resides in the cytoplasm. The catalysed reaction is Endonucleolytic cleavage to 5'-phosphomonoester.. Digests double-stranded RNA. Involved in the processing of primary rRNA transcript to yield the immediate precursors to the large and small rRNAs (23S and 16S). Processes some mRNAs, and tRNAs when they are encoded in the rRNA operon. Processes pre-crRNA and tracrRNA of type II CRISPR loci if present in the organism. The protein is Ribonuclease 3 of Listeria monocytogenes serovar 1/2a (strain ATCC BAA-679 / EGD-e).